The primary structure comprises 150 residues: Ribonuclease K6 (150 aa).

Positions 1 to 23 (MVLCFPLLLLVLVLWGQVCPLHA) are cleaved as a signal peptide. Residue histidine 38 is the Proton acceptor of the active site. Disulfide bonds link cysteine 46–cysteine 104, cysteine 60–cysteine 114, cysteine 78–cysteine 129, and cysteine 85–cysteine 92. An N-linked (GlcNAc...) asparagine glycan is attached at asparagine 55. Substrate contacts are provided by residues 61–65 (KPQNT) and lysine 86. Asparagine 100 is a glycosylation site (N-linked (GlcNAc...) asparagine). Arginine 105 provides a ligand contact to substrate. Residue histidine 145 is the Proton donor of the active site.

Belongs to the pancreatic ribonuclease family. In terms of assembly, interacts (via N-terminus) with bacterial lipopolysaccharide (LPS).

The protein resides in the secreted. It localises to the lysosome. It is found in the cytoplasmic granule. Ribonuclease which shows a preference for the pyrimidines uridine and cytosine. Has potent antibacterial activity against a range of Gram-positive and Gram-negative bacteria, including P.aeruginosa, A.baumanii, M.luteus, S.aureus, E.faecalis, E.faecium, S.saprophyticus and E.coli. Causes loss of bacterial membrane integrity, and also promotes agglutination of Gram-negative bacteria. Probably contributes to urinary tract sterility. Bactericidal activity is independent of RNase activity. The protein is Ribonuclease K6 (RNASE6) of Aotus trivirgatus (Three-striped night monkey).